The following is a 688-amino-acid chain: Methionine--tRNA ligase (688 aa).

Positions P20 to H30 match the 'HIGH' region motif. Residues C151, C154, C164, and C167 each contribute to the Zn(2+) site. Residues K337 to S341 carry the 'KMSKS' region motif. K340 serves as a coordination point for ATP. Residues T587–M688 form the tRNA-binding domain.

Belongs to the class-I aminoacyl-tRNA synthetase family. MetG type 1 subfamily. In terms of assembly, homodimer. Zn(2+) serves as cofactor.

It localises to the cytoplasm. It catalyses the reaction tRNA(Met) + L-methionine + ATP = L-methionyl-tRNA(Met) + AMP + diphosphate. Its function is as follows. Is required not only for elongation of protein synthesis but also for the initiation of all mRNA translation through initiator tRNA(fMet) aminoacylation. The polypeptide is Methionine--tRNA ligase (Vibrio parahaemolyticus serotype O3:K6 (strain RIMD 2210633)).